The chain runs to 113 residues: UPF0122 protein MCAP_0480 (113 aa).

It belongs to the UPF0122 family.

In terms of biological role, might take part in the signal recognition particle (SRP) pathway. This is inferred from the conservation of its genetic proximity to ftsY/ffh. May be a regulatory protein. The chain is UPF0122 protein MCAP_0480 from Mycoplasma capricolum subsp. capricolum (strain California kid / ATCC 27343 / NCTC 10154).